The primary structure comprises 671 residues: MSELEEDFAKILMLKEERIKELEKRLSEKEEEIQELKRKLHKCQSVLPVPSTHIGPRTTRAQGISAEPQTYRSFHDLRQAFRKFTKFERSKDLIKEAILDNDFMKNLELSQIQEIVDCMYPVEYGKDSCIIKEGDVGSLAYVMEDGKVEVTKEGVKLCTMGPGKVFGELAILYNCTRTATVKTLVNVKLWAIDRQCFQTIMMRTGLIKHTEYMEFLKSVPTFQSLPEEILSKLADVLEETHYENEEYSIRQGARGDTFFIISKGKVNVTREDSPSEDPIFLRTLGKGDWFGEKALQGEDVRTANVIAAEAVTCLVIDRDSFKHLIGGLDDVSNKAYEDAEAKAKYEAEAAFFANLKLSDFNIIDTLGVGGFGRVELVQLKSEESKTFAMKILKKRHIVDTRQQEHIRSEKQIMQGAHSDFIVRLYRTFKDSKYLYMLMEACLGGELWTILRDRGSFEDSTTRFYTACVVEAFAYLHSKGIIYRDLKPENLILDHRGYAKLVDFGFAKKIGFGKKTWTFCGTPEYVAPEIILNKGHDISADYWSLGILMYELLTGSPPFSGPDPMKTYNIILRGIDMIEFPKKIAKNAANLIKKLCRDNPSERLGNLKNGVKDIQKHKWFEGFNWEGLRKGTLTPPIIPSVASPTDTSNFDGFPEDNDEPPPDDNSGWDIDF.

The residue at position 2 (Ser-2) is an N-acetylserine. Residues 2 to 59 (SELEEDFAKILMLKEERIKELEKRLSEKEEEIQELKRKLHKCQSVLPVPSTHIGPRTT) are a coiled coil. The segment at 2 to 102 (SELEEDFAKI…LIKEAILDND (101 aa)) is required for dimerization. The tract at residues 9-44 (AKILMLKEERIKELEKRLSEKEEEIQELKRKLHKCQ) is leucine-zipper. Positions 50–75 (PSTHIGPRTTRAQGISAEPQTYRSFH) are autoinhibitory domain. Position 59 is a phosphothreonine; by autocatalysis (Thr-59). The cGMP-binding, high affinity stretch occupies residues 103 to 220 (FMKNLELSQI…EYMEFLKSVP (118 aa)). 3',5'-cyclic GMP-binding positions include 167–170 (GELA), 177–178 (RT), Arg-282, 291–294 (GEKA), 301–302 (RT), and Tyr-336. Residues 221–341 (TFQSLPEEIL…SNKAYEDAEA (121 aa)) form a cGMP-binding, low affinity region. In terms of domain architecture, Protein kinase spans 360–619 (FNIIDTLGVG…VKDIQKHKWF (260 aa)). Residues 366–374 (LGVGGFGRV) and Lys-390 contribute to the ATP site. The active-site Proton acceptor is Asp-484. Thr-515 is subject to Phosphothreonine. The AGC-kinase C-terminal domain occupies 620 to 671 (EGFNWEGLRKGTLTPPIIPSVASPTDTSNFDGFPEDNDEPPPDDNSGWDIDF). The tract at residues 635–671 (PIIPSVASPTDTSNFDGFPEDNDEPPPDDNSGWDIDF) is disordered. Over residues 652–661 (FPEDNDEPPP) the composition is skewed to acidic residues.

Belongs to the protein kinase superfamily. AGC Ser/Thr protein kinase family. cGMP subfamily. In terms of assembly, isoform alpha: parallel homodimer or heterodimer and also heterotetramer. Interacts directly with PPP1R12A. Non-covalent dimer of dimer of PRKG1-PRKG1 and PPP1R12A-PPP1R12A. This interaction targets PRKG1 to stress fibers to mediate smooth muscle cell relaxation and vasodilation in responses to rises in cGMP. Isoform beta: antiparallel homodimer. Part of cGMP kinase signaling complex at least composed of ACTA2/alpha-actin, CNN1/calponin H1, PLN/phospholamban, PRKG1 and ITPR1. Interacts with IRAG1. Forms a stable complex with ITPR1, IRAG1, and isoform beta of PRKG1. Interacts with TRPC7 (via ankyrin repeat domain). Isoform alpha interacts with RGS2. Interacts with GTF2I. Post-translationally, autophosphorylation increases kinase activity. 65 kDa monomer is produced by proteolytic cleavage.

It localises to the cytoplasm. The catalysed reaction is L-seryl-[protein] + ATP = O-phospho-L-seryl-[protein] + ADP + H(+). The enzyme catalyses L-threonyl-[protein] + ATP = O-phospho-L-threonyl-[protein] + ADP + H(+). In the absence of cGMP, PRKG1 activity is suppressed by autoinhibitory contacts. Serine/threonine protein kinase that acts as a key mediator of the nitric oxide (NO)/cGMP signaling pathway. GMP binding activates PRKG1, which phosphorylates serines and threonines on many cellular proteins. Numerous protein targets for PRKG1 phosphorylation are implicated in modulating cellular calcium, but the contribution of each of these targets may vary substantially among cell types. Proteins that are phosphorylated by PRKG1 regulate platelet activation and adhesion, smooth muscle contraction, cardiac function, gene expression, feedback of the NO-signaling pathway, and other processes involved in several aspects of the CNS like axon guidance, hippocampal and cerebellar learning, circadian rhythm and nociception. Smooth muscle relaxation is mediated through lowering of intracellular free calcium, by desensitization of contractile proteins to calcium, and by decrease in the contractile state of smooth muscle or in platelet activation. Regulates intracellular calcium levels via several pathways: phosphorylates IRAG1 and inhibits IP3-induced Ca(2+) release from intracellular stores, phosphorylation of KCNMA1 (BKCa) channels decreases intracellular Ca(2+) levels, which leads to increased opening of this channel. PRKG1 phosphorylates the canonical transient receptor potential channel (TRPC) family which inactivates the associated inward calcium current. Another mode of action of NO/cGMP/PKGI signaling involves PKGI-mediated inactivation of the Ras homolog gene family member A (RhoA). Phosphorylation of RHOA by PRKG1 blocks the action of this protein in myriad processes: regulation of RHOA translocation; decreasing contraction; controlling vesicle trafficking, reduction of myosin light chain phosphorylation resulting in vasorelaxation. Activation of PRKG1 by NO signaling also alters gene expression in a number of tissues. In smooth muscle cells, increased cGMP and PRKG1 activity influence expression of smooth muscle-specific contractile proteins, levels of proteins in the NO/cGMP signaling pathway, down-regulation of the matrix proteins osteopontin and thrombospondin-1 to limit smooth muscle cell migration and phenotype. Regulates vasodilator-stimulated phosphoprotein (VASP) functions in platelets and smooth muscle. This is cGMP-dependent protein kinase 1 (PRKG1) from Oryctolagus cuniculus (Rabbit).